Reading from the N-terminus, the 1543-residue chain is ATP-binding cassette sub-family C member 2 (1543 aa).

At 1–26 (MDEFCNSTFWNLSLLKSPEADLPLCF) the chain is on the extracellular side. 2 N-linked (GlcNAc...) asparagine glycosylation sites follow: Asn6 and Asn11. Residues 27 to 47 (EQTVLVWIPLGFLWLLAPWQL) traverse the membrane as a helical segment. Over 48 to 67 (YRIYRSRTKRFAITKFYLAK) the chain is Cytoplasmic. The chain crosses the membrane as a helical span at residues 68-88 (QVFVVCLLILAAIDLSLALTE). Residues 89-92 (DTGQ) lie on the Extracellular side of the membrane. A helical membrane pass occupies residues 93–113 (ATIPPVKYTNPILYLCTWLLV). The Cytoplasmic segment spans residues 114–125 (LVIQHCRQCCIQ). A helical membrane pass occupies residues 126 to 146 (KNSWFLSMFWILSLLCGIFQF). Residues 147-164 (QTLIRALLQDSKSNMTYS) are Extracellular-facing. N-linked (GlcNAc...) asparagine glycosylation occurs at Asn160. Residues 165 to 185 (CLFFVSYGFQIVILILSAFSE) traverse the membrane as a helical segment. At 186–311 (SSDSTHAPSA…DFPKSWLVKA (126 aa)) the chain is on the cytoplasmic side. The interval 260–285 (LKKSQQSPEGTSHGLTKKQSQSQDVL) is disordered. Residues 263 to 283 (SQQSPEGTSHGLTKKQSQSQD) show a composition bias toward polar residues. Residues Ser279 and Ser281 each carry the phosphoserine modification. Residues 312-332 (LFKTFYVVILKSFILKLAHDI) traverse the membrane as a helical segment. In terms of domain architecture, ABC transmembrane type-1 1 spans 320 to 603 (ILKSFILKLA…LPMVISSVIQ (284 aa)). Residues 333–358 (LLFLNPQLLKFLIGFVKDPDSYPWVG) lie on the Extracellular side of the membrane. Residues 359–379 (YIYAILMFSVTLIQSFFLQCY) traverse the membrane as a helical segment. Residues 380–435 (FQFCFVLGMTVRTTIIASVYKKALTLSNLARRQYTIGETVNLMSVDSQKLMDVTNY) lie on the Cytoplasmic side of the membrane. Residues 436–456 (IHLLWSSVLQIALSIFFLWRE) form a helical membrane-spanning segment. Over 457 to 459 (LGP) the chain is Extracellular. The helical transmembrane segment at 460-480 (SILAGVGLMVLLVPVNGVLAT) threads the bilayer. At 481–542 (KIRKIQVQNM…NLLRFSQLQT (62 aa)) the chain is on the cytoplasmic side. Residues 543–563 (ILIFILHLTPTLVSVITFSVY) form a helical membrane-spanning segment. Over 564–585 (VLVDSQNVLNAEKAFTSITLFN) the chain is Extracellular. Residues 586–606 (ILRFPLAMLPMVISSVIQASV) traverse the membrane as a helical segment. The Cytoplasmic portion of the chain corresponds to 607–969 (SVDRLEQYLG…VKFSIYLKYL (363 aa)). The region spanning 635–859 (VQFSEASFTW…KGVFAKNWKT (225 aa)) is the ABC transporter 1 domain. An ATP-binding site is contributed by 669 to 676 (GTVGSGKS). Position 876 is a phosphoserine (Ser876). Residues 903 to 927 (RENSLRRTLSRSSRSGSRRGKSLKS) form a disordered region. Residues 908 to 917 (RRTLSRSSRS) are compositionally biased toward low complexity. Residues Ser924 and Ser928 each carry the phosphoserine modification. A helical membrane pass occupies residues 970 to 990 (QAVGWWSLLFIVIFYVLNYVA). Residues 977 to 1262 (LLFIVIFYVL…LVRMTSEVET (286 aa)) form the ABC transmembrane type-1 2 domain. Residues 991–1031 (FIGTNLWLSAWTSDSEKQNGTDNSPSQRDMRIGVFGALGIA) lie on the Extracellular side of the membrane. N-linked (GlcNAc...) asparagine glycosylation is present at Asn1009. A helical transmembrane segment spans residues 1032-1052 (QGIFLLSSSLWSIYACRNASK). The Cytoplasmic segment spans residues 1053-1095 (TLHRQLLTNILRAPMSFFDTTPTGRIVNRFAGDISTVDDTLPQ). Residues 1096 to 1116 (TLRSWLLCFFGIVSTLVMICM) form a helical membrane-spanning segment. Position 1117 (Ala1117) is a topological domain, extracellular. A helical membrane pass occupies residues 1118-1138 (TPIFIIIIIPLSILYVSVQVF). Topologically, residues 1139–1209 (YVATSRQLRR…TSNRWLAIRL (71 aa)) are cytoplasmic. A helical transmembrane segment spans residues 1210-1230 (ELVGNLIVFCSALLLVIYKNS). Residues 1231-1232 (LT) lie on the Extracellular side of the membrane. A helical membrane pass occupies residues 1233–1253 (GDTVGFVLSNALNITQTLNWL). The Cytoplasmic segment spans residues 1254-1543 (VRMTSEVETN…GIESVNHTEL (290 aa)). Residues 1298 to 1532 (IQFNNYQVRY…MGPFYLMAKE (235 aa)) enclose the ABC transporter 2 domain. 1332–1339 (GRTGAGKS) is an ATP binding site. Ser1436 carries the post-translational modification Phosphoserine.

The protein belongs to the ABC transporter superfamily. ABCC family. Conjugate transporter (TC 3.A.1.208) subfamily. As to expression, expressed in liver.

It localises to the apical cell membrane. The enzyme catalyses an S-substituted glutathione(in) + ATP + H2O = an S-substituted glutathione(out) + ADP + phosphate + H(+). The catalysed reaction is taurolithocholate 3-sulfate(in) + ATP + H2O = taurolithocholate 3-sulfate(out) + ADP + phosphate + H(+). It catalyses the reaction ATP + H2O + xenobioticSide 1 = ADP + phosphate + xenobioticSide 2.. It carries out the reaction leukotriene C4(in) + ATP + H2O = leukotriene C4(out) + ADP + phosphate + H(+). The enzyme catalyses 17beta-estradiol 17-O-(beta-D-glucuronate)(in) + ATP + H2O = 17beta-estradiol 17-O-(beta-D-glucuronate)(out) + ADP + phosphate + H(+). The catalysed reaction is (4Z,15Z)-bilirubin IXalpha C8-beta-D-glucuronoside(in) + ATP + H2O = (4Z,15Z)-bilirubin IXalpha C8-beta-D-glucuronoside(out) + ADP + phosphate + H(+). It catalyses the reaction (4Z,15Z)-bilirubin IXalpha C8,C12-beta-D-bisglucuronoside(in) + ATP + H2O = (4Z,15Z)-bilirubin IXalpha C8,C12-beta-D-bisglucuronoside(out) + ADP + phosphate + H(+). Its function is as follows. ATP-dependent transporter of the ATP-binding cassette (ABC) family that binds and hydrolyzes ATP to enable active transport of various substrates including many drugs, toxicants and endogenous compound across cell membranes. Transports a wide variety of conjugated organic anions such as sulfate-, glucuronide- and glutathione (GSH)-conjugates of endo- and xenobiotics substrates. Mediates hepatobiliary excretion of mono- and bis-glucuronidated bilirubin molecules and therefore play an important role in bilirubin detoxification. Mediates also hepatobiliary excretion of others glucuronide conjugates such as 17beta-estradiol 17-glucosiduronic acid and leukotriene C4. Transports sulfated bile salt such as taurolithocholate sulfate. Transports various anticancer drugs, such as anthracycline, vinca alkaloid and methotrexate and HIV-drugs such as protease inhibitors. This chain is ATP-binding cassette sub-family C member 2, found in Mus musculus (Mouse).